Consider the following 260-residue polypeptide: MRRGAYTPRSTPFPRDRRSYNAGKGRSFRSYRRRGPVRPLARRNLFGDDHARAFTYKTLSEDQFGPDFTIHNNNYKSSYISMPVKTRALSDNRVGDYIKLVNISFTGTVCIKNSQMESDGSPMLGLHGLFTCVLVRDKTPRIYSATEPLIPFPQLFGSINASYADLSIQDPYKDRFTVIRQVSYPVNTEKGDHMCRFKGTRRFGGRYPIWTSFKDDGGSGDSSGLYSNTYKNAILVYYVWLSDVSSQLEMYCKYVTRYIG.

The tract at residues 1-29 (MRRGAYTPRSTPFPRDRRSYNAGKGRSFR) is disordered. A Bipartite nuclear localization signal motif is present at residues 21 to 42 (NAGKGRSFRSYRRRGPVRPLAR). A Nuclear localization signal motif is present at residues 84 to 100 (VKTRALSDNRVGDYIKL). The interval 154 to 191 (QLFGSINASYADLSIQDPYKDRFTVIRQVSYPVNTEKG) is interaction with Arabidopsis thaliana NSI protein.

This sequence belongs to the begomovirus nuclear shuttle protein family. In terms of assembly, binds to single-stranded and double-stranded viral DNA. Interacts with the host nuclear shuttle interacting (NSI) protein. This interaction may allow NSP to recruit NSI monomers to the viral genome and thus regulate nuclear export of viral genome by NSP.

It is found in the host nucleus. Its subcellular location is the host cytoplasm. The protein resides in the host cell membrane. Functionally, binds to the genomic viral ssDNA, shuttles it into and out of the cell nucleus. Begomoviruses use 2 proteins to transport their DNA from cell to cell. The nuclear shuttle protein (NSP) shuttles it between nucleus and cytoplasm and the movement protein (MP) probably transports the DNA-NSP complex to the cell periphery and facilitates movement across the cell wall. The protein is Nuclear shuttle protein of Indian cassava mosaic virus (ICMV).